The following is a 563-amino-acid chain: MGSQNRPPPPRKRQPPPPEDHLVTYKRRRSKETQPLPLMANGANSKKDAKAQHWISWRDTLHGFLQSPAISQGGGIQTCIRHALQHNPCLLTNGVVVHTEFKGNPAHSQGEEAKVQHPNGAAGGKVVSADAAIQDAAAAASSEANKAMCNNALFDILVSQKFALLCHLLLGTFHVNKPGDVIDLEKIDAKMRNGDYAHNPALFDDDIQQMWEKFEQVGQEMTGLASNLSTISRVSYQKQASGFSEAEVAEHRIEEISLPGAVHVVTKESTTTVQLAPCDSSHSTIPKRTVPPGRDLCPCDGCGTKVDVEEGLICDECDTMYHFACVKLLNPDIKQVPAIWHCSTCSFKKKELAADTTNNVAHDCLHGGNCVLCDQLELVKTEEEDPKLPIKIELAEEREGSSVSSMGEDNEPDLSTTALSNLCKHCGTCEDDDKRFMVCGHPYCVYKFYHIRCLKTSQLAIEQQKKLGCWYCPSCLCRGCFQDKDDDQIVMCDGCDEGYHIYCMRPARNTIPKGKWYCTFCKIRRAAEGMHKYEDSVLKIHGNSKHACNVNQSKDSEGDGTEK.

The interval 1 to 46 is disordered; the sequence is MGSQNRPPPPRKRQPPPPEDHLVTYKRRRSKETQPLPLMANGANSK. PHD-type zinc fingers lie at residues 296–348, 420–472, and 474–524; these read LCPC…CSFK, SNLC…CWYC, and SCLC…CKIR.

As to quaternary structure, interacts with TRX1. Expressed in shoot apical meristem and leaves.

Its subcellular location is the nucleus. Functionally, probable transcription factor involved in the regulation of floral induction under long day (LD) conditions. Promotes photoperiodic flowering by repressing GHD7, a major floral repressor. Seems to function independently of HD1. This is PHD finger protein EHD3 from Oryza sativa subsp. japonica (Rice).